Consider the following 335-residue polypeptide: Holliday junction branch migration complex subunit RuvB (335 aa).

Residues 1–183 form a large ATPase domain (RuvB-L) region; that stretch reads MDERIISSET…FGVIDHLEFY (183 aa). ATP is bound by residues L22, R23, G64, K67, T68, T69, 130 to 132, R173, Y183, and R220; that span reads EDY. Position 68 (T68) interacts with Mg(2+). The segment at 184 to 254 is small ATPAse domain (RuvB-S); the sequence is TEEQLTEIVL…LAKEALTLLQ (71 aa). The interval 257–335 is head domain (RuvB-H); sequence PRGLDTIDQK…HLGISYEKEV (79 aa). DNA-binding residues include R293, R312, and R317.

It belongs to the RuvB family. As to quaternary structure, homohexamer. Forms an RuvA(8)-RuvB(12)-Holliday junction (HJ) complex. HJ DNA is sandwiched between 2 RuvA tetramers; dsDNA enters through RuvA and exits via RuvB. An RuvB hexamer assembles on each DNA strand where it exits the tetramer. Each RuvB hexamer is contacted by two RuvA subunits (via domain III) on 2 adjacent RuvB subunits; this complex drives branch migration. In the full resolvosome a probable DNA-RuvA(4)-RuvB(12)-RuvC(2) complex forms which resolves the HJ.

It localises to the cytoplasm. It carries out the reaction ATP + H2O = ADP + phosphate + H(+). The RuvA-RuvB-RuvC complex processes Holliday junction (HJ) DNA during genetic recombination and DNA repair, while the RuvA-RuvB complex plays an important role in the rescue of blocked DNA replication forks via replication fork reversal (RFR). RuvA specifically binds to HJ cruciform DNA, conferring on it an open structure. The RuvB hexamer acts as an ATP-dependent pump, pulling dsDNA into and through the RuvAB complex. RuvB forms 2 homohexamers on either side of HJ DNA bound by 1 or 2 RuvA tetramers; 4 subunits per hexamer contact DNA at a time. Coordinated motions by a converter formed by DNA-disengaged RuvB subunits stimulates ATP hydrolysis and nucleotide exchange. Immobilization of the converter enables RuvB to convert the ATP-contained energy into a lever motion, pulling 2 nucleotides of DNA out of the RuvA tetramer per ATP hydrolyzed, thus driving DNA branch migration. The RuvB motors rotate together with the DNA substrate, which together with the progressing nucleotide cycle form the mechanistic basis for DNA recombination by continuous HJ branch migration. Branch migration allows RuvC to scan DNA until it finds its consensus sequence, where it cleaves and resolves cruciform DNA. This chain is Holliday junction branch migration complex subunit RuvB, found in Listeria monocytogenes serotype 4a (strain HCC23).